Reading from the N-terminus, the 185-residue chain is MLVLASASPRRREILSRFIRDFHVVPSNAEERCSGTPEECAVELARLKAREVYSRVGGTVIGADTVVSIDGRVLGKPSDEGEAYRMLKLLSGRVHRVTTGYCIIHEGKEIAGSATTEVKFRELDDELIWAYIRTGEPMDKAGAYGIQGKAGLFVEWIRGDYYNVVGFPMEIIWKLRELGFEVLSR.

Residue D64 is the Proton acceptor of the active site.

The protein belongs to the Maf family. YhdE subfamily. A divalent metal cation serves as cofactor.

Its subcellular location is the cytoplasm. The enzyme catalyses dTTP + H2O = dTMP + diphosphate + H(+). It carries out the reaction UTP + H2O = UMP + diphosphate + H(+). Its function is as follows. Nucleoside triphosphate pyrophosphatase that hydrolyzes dTTP and UTP. May have a dual role in cell division arrest and in preventing the incorporation of modified nucleotides into cellular nucleic acids. This is dTTP/UTP pyrophosphatase from Thermococcus gammatolerans (strain DSM 15229 / JCM 11827 / EJ3).